Consider the following 184-residue polypeptide: Inorganic pyrophosphatase (184 aa).

3 residues coordinate substrate: Lys19, Arg33, and Tyr45. Asp55, Asp60, and Asp92 together coordinate Mg(2+). Tyr129 contributes to the substrate binding site.

This sequence belongs to the PPase family. As to quaternary structure, homohexamer. It depends on Mg(2+) as a cofactor.

Its subcellular location is the cytoplasm. It carries out the reaction diphosphate + H2O = 2 phosphate + H(+). Catalyzes the hydrolysis of inorganic pyrophosphate (PPi) forming two phosphate ions. The sequence is that of Inorganic pyrophosphatase from Mycoplasma genitalium (strain ATCC 33530 / DSM 19775 / NCTC 10195 / G37) (Mycoplasmoides genitalium).